The sequence spans 227 residues: Claudin-15 (227 aa).

A topological domain (cytoplasmic) is located at residue methionine 1. Residues 2–24 (SIAVETFGFFMSALGLLMLGVTL) traverse the membrane as a helical segment. Residues 25 to 74 (PNSYWRVSTVHGNVITTNTIFENLWYSCATDSLGVSNCWDFPSMLALSGY) are Extracellular-facing. Cysteine 52 and cysteine 62 are joined by a disulfide. The chain crosses the membrane as a helical span at residues 75 to 99 (VQGCRALMITAILLGFLGLFLGMVG). Residues 100-115 (LRCTNVGNIDLSRKAK) lie on the Cytoplasmic side of the membrane. Serine 111 is modified (phosphoserine). A helical transmembrane segment spans residues 116 to 140 (LLAIAGAFHILAGACGMVAISWYAV). Residues 141–159 (NITTDFFNPLYVGTKYELG) are Extracellular-facing. Residues 146 to 147 (FF) form an important for the formation of tight-junction strand-like structures region. The helical transmembrane segment at 160–182 (SALYLGWSASLLSILGGICVFST) threads the bilayer. Residues 183–227 (CCCDSKEDPATRVGLPYKPSTVVTARATSDESDVSFGKYGKNAYV) lie on the Cytoplasmic side of the membrane. Phosphoserine occurs at positions 211, 214, and 217.

The protein belongs to the claudin family. Can form homo- and heteropolymeric tight junction strands. Post-translationally, palmitoylated. Detected in kidney, jejunum and colon (at protein level).

The protein localises to the cell junction. Its subcellular location is the tight junction. The protein resides in the cell membrane. The enzyme catalyses Na(+)(in) = Na(+)(out). The catalysed reaction is K(+)(in) = K(+)(out). It catalyses the reaction Cs(+)(in) = Cs(+)(out). It carries out the reaction Rb(+)(in) = Rb(+)(out). The enzyme catalyses Li(+)(in) = Li(+)(out). The catalysed reaction is NH4(+)(in) = NH4(+)(out). It catalyses the reaction methylamine(out) = methylamine(in). It carries out the reaction H2O(in) = H2O(out). Forms paracellular channels: polymerizes in tight junction strands with cation- and water-selective channels through the strands, conveying epithelial permeability in a process known as paracellular tight junction permeability. In intestinal epithelium, allows for sodium and water fluxes from the peritoneal side to the lumen of the intestine to regulate nutrient absorption and intestinal morphogenesis. This chain is Claudin-15, found in Rattus norvegicus (Rat).